We begin with the raw amino-acid sequence, 622 residues long: DNA-directed RNA polymerase subunit gamma (622 aa).

Zn(2+)-binding residues include Cys-70, Cys-72, Cys-85, and Cys-88. Residues Asp-466, Asp-468, and Asp-470 each coordinate Mg(2+).

It belongs to the RNA polymerase beta' chain family. RpoC1 subfamily. In cyanobacteria the RNAP catalytic core is composed of 2 alpha, 1 beta, 1 beta', 1 gamma and 1 omega subunit. When a sigma factor is associated with the core the holoenzyme is formed, which can initiate transcription. The cofactor is Mg(2+). Zn(2+) is required as a cofactor.

It carries out the reaction RNA(n) + a ribonucleoside 5'-triphosphate = RNA(n+1) + diphosphate. Functionally, DNA-dependent RNA polymerase catalyzes the transcription of DNA into RNA using the four ribonucleoside triphosphates as substrates. The protein is DNA-directed RNA polymerase subunit gamma of Thermosynechococcus vestitus (strain NIES-2133 / IAM M-273 / BP-1).